Reading from the N-terminus, the 31-residue chain is Mycofactocin precursor peptide (31 aa).

It belongs to the mycofactocin precursor peptide family. Post-translationally, the post-translational modifications that lead to mycofactocin involve oxidative decarboxylation of the C-terminal tyrosine residue catalyzed by MftC, introduction of a tyramine-valine cross-link, removal of the modified C-terminal dipeptide by MftE. The released dipeptide then undergoes oxidative deamination by MftD, glycosylation by MftF and methylation by an unknown enzyme.

In terms of biological role, precursor peptide that leads to mycofactocin (MFT) after extensive post-translational modifications by enzymes encoded by adjacent genes. Mycofactocin acts as a redox cofactor of nicotinamide-dependent oxidoreductases encoded in the same locus. Is required for the in vivo ethanol assimilation in M.smegmatis. The polypeptide is Mycofactocin precursor peptide (Mycolicibacterium smegmatis (strain ATCC 700084 / mc(2)155) (Mycobacterium smegmatis)).